The following is a 69-amino-acid chain: Purkinje cell protein 4-like protein 1 (69 aa).

The segment covering 1 to 15 (MSELNTKTSPATNQA) has biased composition (polar residues). Residues 1–47 (MSELNTKTSPATNQAPGPEEKGKAGSAKKTEDEEEEIDIDLTAPETE) form a disordered region. Threonine 8 bears the Phosphothreonine mark. Residues 18–31 (PEEKGKAGSAKKTE) show a composition bias toward basic and acidic residues. In terms of domain architecture, IQ spans 46-69 (TEKAALAIQGKFRRFQKRKKDPSS).

Belongs to the PCP4 family.

The sequence is that of Purkinje cell protein 4-like protein 1 (PCP4L1) from Bos taurus (Bovine).